Reading from the N-terminus, the 233-residue chain is Pyridoxal phosphate homeostasis protein (233 aa).

Residue lysine 35 is modified to N6-(pyridoxal phosphate)lysine.

The protein belongs to the pyridoxal phosphate-binding protein YggS/PROSC family.

Functionally, pyridoxal 5'-phosphate (PLP)-binding protein, which is involved in PLP homeostasis. This is Pyridoxal phosphate homeostasis protein from Pasteurella multocida (strain Pm70).